A 772-amino-acid polypeptide reads, in one-letter code: Heat shock protein 88 (772 aa).

Disordered regions lie at residues 496–519 (TAAPAETPAETPANGEAAKPAEEK) and 729–772 (LGKP…DILD). The span at 497 to 513 (AAPAETPAETPANGEAA) shows a compositional bias: low complexity. The span at 735–772 (KPVEVPKEEPKDTPMESKDAPAEEPVATKDQKMDDILD) shows a compositional bias: basic and acidic residues.

Belongs to the heat shock protein 70 family.

In terms of biological role, may function in protein folding and assembly, and disassembly of protein complexes. In Dictyostelium discoideum (Social amoeba), this protein is Heat shock protein 88 (hspH).